Here is a 93-residue protein sequence, read N- to C-terminus: MARDTAILRVTGFVQGVGFRYTTKHVAYKYDVSGTVKNLDDGSVEIHAIAEEENLNKFIDAIKKGPSPGCRIEHVYIYKGAPVEDRKTFDIVY.

In terms of domain architecture, Acylphosphatase-like spans 5–93 (TAILRVTGFV…EDRKTFDIVY (89 aa)). Active-site residues include R20 and N38.

Belongs to the acylphosphatase family.

The catalysed reaction is an acyl phosphate + H2O = a carboxylate + phosphate + H(+). This Listeria welshimeri serovar 6b (strain ATCC 35897 / DSM 20650 / CCUG 15529 / CIP 8149 / NCTC 11857 / SLCC 5334 / V8) protein is Acylphosphatase (acyP).